The primary structure comprises 316 residues: L-lactate dehydrogenase (316 aa).

Residue 34–39 (DVVEGV) participates in NAD(+) binding. Residues Arg-89, Asn-121, and Arg-152 each contribute to the substrate site. Asn-121 provides a ligand contact to NAD(+). Catalysis depends on His-172, which acts as the Proton acceptor.

The protein belongs to the LDH/MDH superfamily. LDH family. In terms of assembly, homotetramer.

It catalyses the reaction (S)-lactate + NAD(+) = pyruvate + NADH + H(+). It functions in the pathway fermentation; pyruvate fermentation to lactate; (S)-lactate from pyruvate: step 1/1. The sequence is that of L-lactate dehydrogenase from Botryococcus braunii (Green alga).